We begin with the raw amino-acid sequence, 293 residues long: Formamidopyrimidine-DNA glycosylase (293 aa).

The Schiff-base intermediate with DNA role is filled by Pro-2. The Proton donor role is filled by Glu-3. Residue Lys-58 is the Proton donor; for beta-elimination activity of the active site. DNA contacts are provided by His-104, Arg-123, and Lys-166. The segment at 257-293 adopts an FPG-type zinc-finger fold; the sequence is KVYDREGETCKTPACGGTIKRFTQNGRSTFWCPKCQK. Arg-283 functions as the Proton donor; for delta-elimination activity in the catalytic mechanism.

This sequence belongs to the FPG family. In terms of assembly, monomer. Zn(2+) serves as cofactor.

It catalyses the reaction Hydrolysis of DNA containing ring-opened 7-methylguanine residues, releasing 2,6-diamino-4-hydroxy-5-(N-methyl)formamidopyrimidine.. The enzyme catalyses 2'-deoxyribonucleotide-(2'-deoxyribose 5'-phosphate)-2'-deoxyribonucleotide-DNA = a 3'-end 2'-deoxyribonucleotide-(2,3-dehydro-2,3-deoxyribose 5'-phosphate)-DNA + a 5'-end 5'-phospho-2'-deoxyribonucleoside-DNA + H(+). Involved in base excision repair of DNA damaged by oxidation or by mutagenic agents. Acts as a DNA glycosylase that recognizes and removes damaged bases. Has a preference for oxidized purines, such as 7,8-dihydro-8-oxoguanine (8-oxoG). Has AP (apurinic/apyrimidinic) lyase activity and introduces nicks in the DNA strand. Cleaves the DNA backbone by beta-delta elimination to generate a single-strand break at the site of the removed base with both 3'- and 5'-phosphates. This is Formamidopyrimidine-DNA glycosylase from Bradyrhizobium diazoefficiens (strain JCM 10833 / BCRC 13528 / IAM 13628 / NBRC 14792 / USDA 110).